Reading from the N-terminus, the 174-residue chain is 3-hydroxyanthranilate 3,4-dioxygenase (174 aa).

An O2-binding site is contributed by arginine 47. Residues histidine 51, glutamate 57, and histidine 95 each coordinate Fe cation. Glutamate 57 contacts substrate. The substrate site is built by arginine 99 and glutamate 110. Residues cysteine 125, cysteine 128, cysteine 162, and cysteine 165 each contribute to the Fe cation site.

Belongs to the 3-HAO family. As to quaternary structure, homodimer. Fe(2+) is required as a cofactor.

The enzyme catalyses 3-hydroxyanthranilate + O2 = (2Z,4Z)-2-amino-3-carboxymuconate 6-semialdehyde. The protein operates within cofactor biosynthesis; NAD(+) biosynthesis; quinolinate from L-kynurenine: step 3/3. Its activity is regulated as follows. Inhibited by 4-chloro-3-hydroxyanthranilate. Mechanism of inactivation involves the oxidation of the catalytic active site Fe(2+) to the catalytically inactive Fe(3+) oxidation state, superoxide production, and formation of two disulfide bonds between Cys-125 and Cys-128, and Cys-162 and Cys-165. Enzyme can be reactivated under reducing conditions. Functionally, catalyzes the oxidative ring opening of 3-hydroxyanthranilate to 2-amino-3-carboxymuconate semialdehyde, which spontaneously cyclizes to quinolinate. This Cupriavidus metallidurans (strain ATCC 43123 / DSM 2839 / NBRC 102507 / CH34) (Ralstonia metallidurans) protein is 3-hydroxyanthranilate 3,4-dioxygenase.